Here is a 275-residue protein sequence, read N- to C-terminus: 3-methyl-2-oxobutanoate hydroxymethyltransferase (275 aa).

Positions 44 and 83 each coordinate Mg(2+). 3-methyl-2-oxobutanoate contacts are provided by residues 44–45 (DS), Asp83, and Lys113. Glu115 is a Mg(2+) binding site. The active-site Proton acceptor is the Glu182.

The protein belongs to the PanB family. Homodecamer; pentamer of dimers. Requires Mg(2+) as cofactor.

It localises to the cytoplasm. The catalysed reaction is 3-methyl-2-oxobutanoate + (6R)-5,10-methylene-5,6,7,8-tetrahydrofolate + H2O = 2-dehydropantoate + (6S)-5,6,7,8-tetrahydrofolate. The protein operates within cofactor biosynthesis; (R)-pantothenate biosynthesis; (R)-pantoate from 3-methyl-2-oxobutanoate: step 1/2. Its function is as follows. Catalyzes the reversible reaction in which hydroxymethyl group from 5,10-methylenetetrahydrofolate is transferred onto alpha-ketoisovalerate to form ketopantoate. The sequence is that of 3-methyl-2-oxobutanoate hydroxymethyltransferase from Enterococcus faecalis (strain ATCC 700802 / V583).